A 113-amino-acid chain; its full sequence is Retrotransposon Gag-like protein 8 (113 aa).

Belongs to the FAM127 family.

The protein is Retrotransposon Gag-like protein 8 (RTL8A) of Bos taurus (Bovine).